The primary structure comprises 484 residues: Poly(A) RNA polymerase GLD2 (484 aa).

Phosphoserine occurs at positions 62 and 69. Residues 72–97 (FRGRKRLSDEKNLPLDGKRQRFHSPH) are disordered. The Nuclear localization signal motif lies at 76–92 (KRLSDEKNLPLDGKRQR). Residues 77 to 90 (RLSDEKNLPLDGKR) show a composition bias toward basic and acidic residues. The residue at position 95 (S95) is a Phosphoserine. 2 residues coordinate Mg(2+): D213 and D215. The 55-residue stretch at 386–440 (NLGDLLLGFLKYYATEFDWNSQMISVREAKAIPRPDGIEWRNKYICVEEPFDGTN) folds into the PAP-associated domain.

The protein belongs to the DNA polymerase type-B-like family. GLD2 subfamily. In terms of assembly, interacts with CPEB1, CPEB2, CPSF1 and PABPC1. Interacts with QKI isoform QKI7; promoting recruitment to miRNA miR-122 and miR-122 stabilization. The cofactor is Mg(2+). Requires Mn(2+) as cofactor. In terms of tissue distribution, expressed in brain. Within brain, it is expressed in cerebellum, hippocampus and medulla.

The protein localises to the cytoplasm. Its subcellular location is the nucleus. The enzyme catalyses RNA(n) + ATP = RNA(n)-3'-adenine ribonucleotide + diphosphate. Functionally, cytoplasmic poly(A) RNA polymerase that adds successive AMP monomers to the 3'-end of specific RNAs, forming a poly(A) tail. In contrast to the canonical nuclear poly(A) RNA polymerase, it only adds poly(A) to selected cytoplasmic mRNAs. Does not play a role in replication-dependent histone mRNA degradation. Adds a single nucleotide to the 3' end of specific miRNAs, monoadenylation stabilizes and prolongs the activity of some but not all miRNAs. The polypeptide is Poly(A) RNA polymerase GLD2 (Homo sapiens (Human)).